Here is a 276-residue protein sequence, read N- to C-terminus: 3beta-hydroxysteroid dehydrogenase (276 aa).

Residues 70–71, N97, Y162, and K166 contribute to the NADP(+) site; that span reads DV. The active-site Proton acceptor is the Y162.

The protein belongs to the short-chain dehydrogenases/reductases (SDR) family.

It carries out the reaction 3-oxo-5beta-cholan-24-oate + NADPH + H(+) = isolithocholate + NADP(+). The enzyme catalyses 12alpha-hydroxy-3-oxo-5beta-cholan-24-oate + NADPH + H(+) = isodeoxycholate + NADP(+). The catalysed reaction is 12alpha-hydroxy-3-oxo-5beta-cholan-24-oate + NADH + H(+) = isodeoxycholate + NAD(+). It catalyses the reaction 7alpha,12alpha-dihydroxy-3-oxo-5beta-cholan-24-oate + NADPH + H(+) = isocholate + NADP(+). It carries out the reaction 3-oxochenodeoxycholate + NADPH + H(+) = isochenodeoxycholate + NADP(+). In terms of biological role, involved in the modification of secondary bile acids into iso-bile acids (3beta-bile acids) via epimerization of the 3-OH group through a 3-oxo-intermediate. Catalyzes the reduction of 12-alpha-hydroxy-3-oxo-5-beta-cholan-24-oate (3-oxo-DCA) and 3-oxo-5-beta-cholan-24-oate (3-oxo-LCA) to yield isodeoxycholate (isoDCA) and isolithocholate (isoLCA), respectively. Is also able to catalyze the reduction of 3-dehydrocholate (3-oxo-CA or 7alpha,12alpha-dihydroxy-3-oxo-5beta-cholan-24-oate) and 7-alpha-hydroxy-3-oxo-5-beta-cholan-24-oate (3-oxo-CDCA), into isocholate (isoCA) and isochenodeoxycholate (isoCDCA), respectively. Accepts both NADPH and NADH as cosubstrates. The conversion of the abundant bile acid deoxycholate (DCA) into isoDCA by the gut bacterium R.gnavus favors the growth of the keystone commensal genus Bacteroides, since isoDCA is less cytotoxic than its parent compound, DCA; iso-bile acids have thus a potential role in modulating gut community composition. This is 3beta-hydroxysteroid dehydrogenase from Mediterraneibacter gnavus (strain ATCC 29149 / DSM 114966 / JCM 6515 / VPI C7-9) (Ruminococcus gnavus).